Consider the following 299-residue polypeptide: Oxygen-dependent coproporphyrinogen-III oxidase (299 aa).

Ser92 serves as a coordination point for substrate. His96 and His106 together coordinate Mn(2+). His106 serves as the catalytic Proton donor. 108-110 (NVR) is a binding site for substrate. Mn(2+) is bound by residues His145 and His175. The interval 240-275 (YVEFNLVWDRGTLFGLQTGGRTESILMSMPPLVRWE) is important for dimerization. Substrate is bound at residue 258-260 (GGR).

It belongs to the aerobic coproporphyrinogen-III oxidase family. As to quaternary structure, homodimer. Requires Mn(2+) as cofactor.

The protein resides in the cytoplasm. It catalyses the reaction coproporphyrinogen III + O2 + 2 H(+) = protoporphyrinogen IX + 2 CO2 + 2 H2O. It participates in porphyrin-containing compound metabolism; protoporphyrin-IX biosynthesis; protoporphyrinogen-IX from coproporphyrinogen-III (O2 route): step 1/1. In terms of biological role, involved in the heme biosynthesis. Catalyzes the aerobic oxidative decarboxylation of propionate groups of rings A and B of coproporphyrinogen-III to yield the vinyl groups in protoporphyrinogen-IX. The chain is Oxygen-dependent coproporphyrinogen-III oxidase from Escherichia coli (strain SE11).